We begin with the raw amino-acid sequence, 1206 residues long: Translocase of chloroplast 132, chloroplastic (1206 aa).

An N-acetylglycine modification is found at Gly2. The stretch at Arg13–Leu33 forms a coiled coil. 2 disordered regions span residues Leu33 to Leu75 and Val97 to Ser119. A compositionally biased stretch (acidic residues) spans Val39–Glu49. Residue Ser195 is modified to Phosphoserine. Residues Gln233–Glu499 are disordered. Residues Ala309 to Val324 show a composition bias toward polar residues. A compositionally biased stretch (low complexity) spans Ser325–Ser336. Phosphoserine occurs at positions 337, 363, and 398. Over residues Leu357–Val379 the composition is skewed to polar residues. The segment covering Lys403–Thr427 has biased composition (basic and acidic residues). Residues Glu430–Ser440 are compositionally biased toward low complexity. The segment covering Ala468 to Thr492 has biased composition (polar residues). One can recognise an AIG1-type G domain in the interval Asp572–Pro801. Positions Gly581–Ser588 are G1. Residues Gly584–Ala589 and Asp603–Gly608 each bind GTP. Ser588 contacts Mg(2+). The homodimerization stretch occupies residues Asp603 to Gln606. The interval Met607–Arg611 is G2. Residues Asp628 to Gly631 form a G3 region. Residues Arg666–Ser671 are homodimerization. The segment at Thr700–Ala703 is G4. GTP contacts are provided by residues His701 and Glu749–Asn750. Residues Glu749 to His751 are G5. A disordered region spans residues Gln824 to Leu862. A compositionally biased stretch (acidic residues) spans Tyr832–Tyr853. The chain crosses the membrane as a helical span at residues Leu1182 to Tyr1199.

It belongs to the TRAFAC class TrmE-Era-EngA-EngB-Septin-like GTPase superfamily. AIG1/Toc34/Toc159-like paraseptin GTPase family. TOC159 subfamily. As to quaternary structure, homodimer. Part of the TOC core complex that includes 1 protein for the specific recognition of transit peptides surrounded by a ring composed of four proteins forming translocation channels, and four to five GTP-binding proteins providing energy. This core complex can interact with components of the TIC complex to form a larger import complex. Chloroplastic protein precursor such as prSS (precursor of the RuBisCO small subunit) interacts with these complexes. The TOC complex contains a specific subset of polar lipids such as digalactosyldiacylglyceride (DGDG), phosphatidylcholine (PC) and phosphatidylglycerol (PG). Mg(2+) serves as cofactor. In terms of processing, phosphorylated by KOC1. Expressed in seedlings, leaves, flowers, and roots.

It is found in the plastid. Its subcellular location is the chloroplast outer membrane. The protein resides in the cytoplasm. In terms of biological role, GTPase involved in protein precursor import into chloroplasts. Seems to recognize chloroplast-destined precursor proteins and regulate their presentation to the translocation channel through GTP hydrolysis. Probably specialized in the import of nuclear encoded non-photosynthetic preproteins from the cytoplasm to the chloroplast. The protein is Translocase of chloroplast 132, chloroplastic of Arabidopsis thaliana (Mouse-ear cress).